Consider the following 264-residue polypeptide: Thiazole synthase (264 aa).

Lys106 (schiff-base intermediate with DXP) is an active-site residue. Residues Gly167, 193 to 194 (AG), and 215 to 216 (NT) each bind 1-deoxy-D-xylulose 5-phosphate.

The protein belongs to the ThiG family. In terms of assembly, homotetramer. Forms heterodimers with either ThiH or ThiS.

The protein localises to the cytoplasm. It catalyses the reaction [ThiS sulfur-carrier protein]-C-terminal-Gly-aminoethanethioate + 2-iminoacetate + 1-deoxy-D-xylulose 5-phosphate = [ThiS sulfur-carrier protein]-C-terminal Gly-Gly + 2-[(2R,5Z)-2-carboxy-4-methylthiazol-5(2H)-ylidene]ethyl phosphate + 2 H2O + H(+). It functions in the pathway cofactor biosynthesis; thiamine diphosphate biosynthesis. In terms of biological role, catalyzes the rearrangement of 1-deoxy-D-xylulose 5-phosphate (DXP) to produce the thiazole phosphate moiety of thiamine. Sulfur is provided by the thiocarboxylate moiety of the carrier protein ThiS. In vitro, sulfur can be provided by H(2)S. The protein is Thiazole synthase of Xylella fastidiosa (strain Temecula1 / ATCC 700964).